Consider the following 202-residue polypeptide: Hydrogenase expression/formation protein HoxM (202 aa).

3 residues coordinate Ni(2+): E15, D61, and H92.

It belongs to the peptidase A31 family.

In terms of biological role, absolutely required for hydrogenase activity. Mediates the attachment of hydrogenase to the bacterial membrane; attachment is a requirement for enzymatic activity. This is Hydrogenase expression/formation protein HoxM (hoxM) from Cupriavidus necator (strain ATCC 17699 / DSM 428 / KCTC 22496 / NCIMB 10442 / H16 / Stanier 337) (Ralstonia eutropha).